Consider the following 379-residue polypeptide: Eukaryotic translation initiation factor 3 subunit H (379 aa).

Residues 17 to 170 (VQIDSLVVMK…IRAYRLSTKA (154 aa)) enclose the MPN domain. Residues 280 to 291 (RQAENEQREARG) are compositionally biased toward basic and acidic residues. A disordered region spans residues 280–300 (RQAENEQREARGEPPLSFDDI).

The protein belongs to the eIF-3 subunit H family. Component of the eukaryotic translation initiation factor 3 (eIF-3) complex.

The protein localises to the cytoplasm. In terms of biological role, component of the eukaryotic translation initiation factor 3 (eIF-3) complex, which is involved in protein synthesis of a specialized repertoire of mRNAs and, together with other initiation factors, stimulates binding of mRNA and methionyl-tRNAi to the 40S ribosome. The eIF-3 complex specifically targets and initiates translation of a subset of mRNAs involved in cell proliferation. The chain is Eukaryotic translation initiation factor 3 subunit H from Brugia malayi (Filarial nematode worm).